The following is a 360-amino-acid chain: Melanoma-associated antigen B16 (360 aa).

A disordered region spans residues 1–118 (MSQKNPEYAA…GNSVIPPDQP (118 aa)). Residues 9–19 (AADHDHTREEM) show a composition bias toward basic and acidic residues. Residues 63–98 (CSSSQLLTASNQEDPAYETPSTSRGLQHPYVSSSES) are compositionally biased toward polar residues. The MAGE domain occupies 125 to 324 (IDGKVNFLVN…TVFPSQYEEA (200 aa)). A disordered region spans residues 340–360 (AGPSSASGESSSDMGSNVPHI). Over residues 341–360 (GPSSASGESSSDMGSNVPHI) the composition is skewed to low complexity.

This Rattus norvegicus (Rat) protein is Melanoma-associated antigen B16 (Mageb16).